Reading from the N-terminus, the 207-residue chain is Nuclear transcription factor Y subunit beta (207 aa).

Positions 1 to 52 (MTMDGDSSTTDASQLGISADYIGGSHYVIQPHDDTEDSMNDHEDTNGSKESF) are a domain. Positions 27 to 52 (YVIQPHDDTEDSMNDHEDTNGSKESF) are disordered. Positions 39-52 (MNDHEDTNGSKESF) are enriched in basic and acidic residues. Residues 53–142 (REQDIYLPIA…PLKLYLQKFR (90 aa)) are b domain. A DNA-binding region spans residues 59 to 65 (LPIANVA). Residues 86–97 (VQECVSEFISFI) are subunit association domain (SAD). A Glycyl lysine isopeptide (Lys-Gly) (interchain with G-Cter in ubiquitin) cross-link involves residue Lys-140. Residues 143–207 (EAMKGEKGIG…ISGVQQIQFS (65 aa)) form a c domain region.

The protein belongs to the NFYB/HAP3 subunit family. In terms of assembly, heterotrimeric transcription factor composed of three components, NF-YA, NF-YB and NF-YC. NF-YB and NF-YC must interact and dimerize for NF-YA association and DNA binding. Interacts with C1QBP. Monoubiquitination at Lys-140 plays an important role in transcriptional activation by allowing the deposition of histone H3 methylations as well as histone H2B monoubiquitination at 'Lys-121'.

Its subcellular location is the nucleus. In terms of biological role, component of the sequence-specific heterotrimeric transcription factor (NF-Y) which specifically recognizes a 5'-CCAAT-3' box motif found in the promoters of its target genes. NF-Y can function as both an activator and a repressor, depending on its interacting cofactors. The sequence is that of Nuclear transcription factor Y subunit beta (Nfyb) from Mus musculus (Mouse).